The primary structure comprises 519 residues: Circadian clock oscillator protein KaiC (519 aa).

Residues 1–247 form the KaiC 1 domain; the sequence is MTSAEMTSPN…TITDHGINIF (247 aa). ATP is bound by residues Gly-49, Thr-50, Gly-51, Lys-52, Thr-53, and Leu-54. Residue Thr-53 coordinates Mg(2+). Glu-77 serves as the catalytic Proton acceptor in CI (KaiC 1). Ser-89 is an ATP binding site. Positions 115-122 are B-loop, required to bind KaiB and SasA; it reads QEVVGGFD. The ATP site is built by Lys-224, Leu-225, Arg-226, Thr-228, His-230, Thr-240, and Asp-241. Residues 248–260 form a linker region; it reads PLGAMRLTQRSSN. The KaiC 2 domain maps to 261–519; it reads VRVSSGVVRL…RGVQEKGPES (259 aa). Thr-290, Gly-291, Thr-292, Gly-293, Lys-294, Thr-295, and Leu-296 together coordinate ATP. Thr-295 contacts Mg(2+). Glu-318 contributes to the Mg(2+) binding site. The Proton acceptor in CII (KaiC 2) role is filled by Glu-318. ATP is bound at residue Trp-331. Position 431 is a phosphoserine; by autocatalysis (Ser-431). Position 432 is a phosphothreonine; by autocatalysis (Thr-432). Arg-451, Lys-457, Met-458, Arg-459, Ser-461, His-463, and Lys-465 together coordinate ATP. Residues 488–497 are A-loop, interacts with KaiA; sequence RIISGSPTRI.

Belongs to the KaiC family. As to quaternary structure, homohexamer resembling 2 stacked donuts with a central pore nearly blocked on one side; hexamerization is dependent on ATP-binding. Binds 12 ATP; 6 between each subunit in both layers. KaiB only binds to phospho-Ser-431 KaiC (not doubly phosphorylated KaiC). Complex formation between KaiB and KaiC is regulated by the phosphorylation state of KaiC and by an ATP hydrolysis-driven conformation change in the CI ring of KaiC; complex formation is slow. Slow complex formation is crucial for the timing of the circadian period. KaiB switches to a thioredoxin-like form called KaiB(fs) when bound to KaiC. The KaiABC complex composition changes during the circadian cycle to control KaiC phosphorylation. Complexes KaiC(6), KaiA(2-4):KaiC(6), KaiB(6):KaiC(6) and KaiC(6):KaiB(6):KaiA(12) are among the most important forms, many form cooperatively. Interacts directly with KaiB and SasA. The CI domain binds to KaiB and SasA; as they have a similar fold they compete for the same site on CI. CikA interacts with this protein in the clock complex. Binds to the C-terminus of KaiA via a coiled-coil structure. Forms KaiC(6):KaiB(1) and KaiC(6):KaiB(6) complexes. It depends on Mg(2+) as a cofactor. In terms of processing, has a 4 step phosphorylation cycle; the autokinase acts first on Thr-432, then Ser-431. When Ser-431 is modified KaiC switches to an autophosphatase mode, acting first on phospho-Thr-432 then phospho-Ser-431. Phosphorylated and dephosphorylated on serine/threonine residues by autocatalysis. Unphosphorylated, mono- and di-phosphorylated forms exist. The phosphorylated form correlates with clock speed. The presence of KaiA increases phosphorylation and stabilizes these forms. Phosphorylated on serine and threonine residues by autocatalysis. Has a 4 step phosphorylation cycle; the autokinase acts first on Thr-432, then Ser-431. When Ser-431 is modified KaiC switches to an autophosphatase mode, acting first on phospho-Thr-432 then phospho-Ser-431.

It carries out the reaction L-seryl-[protein] + ATP = O-phospho-L-seryl-[protein] + ADP + H(+). The catalysed reaction is L-threonyl-[protein] + ATP = O-phospho-L-threonyl-[protein] + ADP + H(+). It catalyses the reaction ATP + H2O = ADP + phosphate + H(+). With respect to regulation, interaction with KaiA stimulates autophosphorylation, KaiC interaction with KaiB sequesters KaiA, preventing it stimulating the KaiC kinase, leading to autodephosphorylation. A KaiA dimer is sufficient to enhance KaiC phosphorylation. Interaction of KaiA with the A-loop stimulates autokinase activity. The KaiABC oscillator complex constitutes the main circadian regulator in cyanobacteria. Complex composition changes during the circadian cycle to control KaiC phosphorylation; KaiA stimulates KaiC autophosphorylation, while KaiB sequesters KaiA, leading to KaiC autodephosphorylation. The Kai complex controls chromosome condensation, leading to a transcription accessible chromosome during the first half of the circadian cycle and a compact, less transcription-accessible chromosome during the latter half. Clock output pathways impact the RpaA transcriptional regulator. Circadian oscillations can be generated in vitro by incubating KaiA, KaiB and KaiC with 1 mM ATP. The cycle is self-sustainable for at least 3 cycles and resistant to temperature changes. Mutations in KaiC alone prolong or reduce the circadian rhythm. A very robust clock is reconstituted with KaiA, KaiB, KaiC, SasA, CikA and RpaA; output is measured by transcription from an appropriate reporter. In terms of biological role, the level of KaiC phosphorylation and KaiC ATPase activity represent the key features of the biochemical oscillator. KaiA homodimer binding to the KaiC CII domain stimulates KaiC's ATPase activity and forms KaiA(2-4):KaiC(6) complexes, which stimulate KaiC autophosphorylation first on Thr-432 then Ser-431. Phospho-Ser-431-KaiC accumulation triggers binding of KaiB to CI to form the KaiB(6):KaiC(6) complex, leading to changes in the output regulators CikA and SasA. KaiB(6):KaiC(6) formation exposes a site for KaiA binding that sequesters KaiA from the CII domain, making the KaiC(6):KaiB(6):KaiA(12) complex that results in KaiC autodephosphorylation. Complete dephosphorylation of KaiC leads to dissociation of KaiA(2):KaiB(1), completing 1 cycle of the Kai oscillator. Functionally, has a weak, temperature-independent ATPase activity (about 15 molecules of ATP per day); the addition of KaiA and KaiB increases activity slightly and makes the activity oscillate with a circadian period in vitro for over 60 hours. ATPase activity defines the circadian period. The phosphorylation state of KaiC modulates its ATPase activity and effects KaiB binding. Its function is as follows. There are several clock output pathways; SasA/RpaA, CikA/RpaA and LabA. KaiC enhances the autophosphorylation activity of SasA, which then transfers its phosphate group to RpaA to activate it. Phosphotransfer is maximal when KaiC phosphorylation is active during the circadian cycle. KaiB and KaiC together enhance the phosphatase activity of CikA on phospho-RpaA. KaiC is important for metabolic partitioning during the dark to light shift, modulating the balance between the Calvin cycle and oxidative pentose phosphate pathway under natural growth conditions. In Synechococcus elongatus (strain ATCC 33912 / PCC 7942 / FACHB-805) (Anacystis nidulans R2), this protein is Circadian clock oscillator protein KaiC.